The primary structure comprises 141 residues: Large ribosomal subunit protein uL11 (141 aa).

This sequence belongs to the universal ribosomal protein uL11 family. As to quaternary structure, part of the ribosomal stalk of the 50S ribosomal subunit. Interacts with L10 and the large rRNA to form the base of the stalk. L10 forms an elongated spine to which L12 dimers bind in a sequential fashion forming a multimeric L10(L12)X complex. One or more lysine residues are methylated.

Functionally, forms part of the ribosomal stalk which helps the ribosome interact with GTP-bound translation factors. This chain is Large ribosomal subunit protein uL11, found in Campylobacter fetus subsp. fetus (strain 82-40).